The sequence spans 202 residues: Tetranectin (202 aa).

The N-terminal stretch at 1-21 (MELWGAYLLLCLFSLLTQVTT) is a signal peptide. An O-linked (GalNAc...) threonine glycan is attached at T25. Disulfide bonds link C71-C81, C98-C197, and C173-C189. The region spanning 77–198 (VHMKCFLAFT…CRDQLPYICQ (122 aa)) is the C-type lectin domain.

As to quaternary structure, homotrimer. As to expression, found in plasma.

The protein resides in the secreted. In terms of biological role, tetranectin binds to plasminogen and to isolated kringle 4. May be involved in the packaging of molecules destined for exocytosis. Plays a role in retinal function. This is Tetranectin (CLEC3B) from Homo sapiens (Human).